Here is a 391-residue protein sequence, read N- to C-terminus: Pyruvate dehydrogenase E1 component subunit beta-3, chloroplastic (391 aa).

Residues 1–35 constitute a chloroplast transit peptide; the sequence is MATAAAASLQYALHGAASASAKPRSAAPGRSVRVV. Glutamate 127 provides a ligand contact to thiamine diphosphate. Residues isoleucine 180, alanine 228, isoleucine 229, and asparagine 233 each contribute to the K(+) site.

Tetramer of 2 alpha and 2 beta subunits. The cofactor is thiamine diphosphate.

Its subcellular location is the plastid. The protein resides in the chloroplast. The catalysed reaction is N(6)-[(R)-lipoyl]-L-lysyl-[protein] + pyruvate + H(+) = N(6)-[(R)-S(8)-acetyldihydrolipoyl]-L-lysyl-[protein] + CO2. In terms of biological role, the pyruvate dehydrogenase complex catalyzes the overall conversion of pyruvate to acetyl-CoA and CO(2). It contains multiple copies of three enzymatic components: pyruvate dehydrogenase (E1), dihydrolipoamide acetyltransferase (E2) and lipoamide dehydrogenase (E3). The polypeptide is Pyruvate dehydrogenase E1 component subunit beta-3, chloroplastic (Oryza sativa subsp. japonica (Rice)).